The primary structure comprises 136 residues: UPF0216 protein PF0452 (136 aa).

The protein belongs to the UPF0216 family.

In Pyrococcus furiosus (strain ATCC 43587 / DSM 3638 / JCM 8422 / Vc1), this protein is UPF0216 protein PF0452.